Reading from the N-terminus, the 273-residue chain is Nitrogenase iron protein (273 aa).

8-15 (GKGGIGKS) provides a ligand contact to ATP. C95 serves as a coordination point for [4Fe-4S] cluster. R98 carries the post-translational modification ADP-ribosylarginine; by dinitrogenase reductase ADP-ribosyltransferase. C130 is a binding site for [4Fe-4S] cluster.

Belongs to the NifH/BchL/ChlL family. As to quaternary structure, homodimer. Requires [4Fe-4S] cluster as cofactor. In terms of processing, the reversible ADP-ribosylation of Arg-98 inactivates the nitrogenase reductase and regulates nitrogenase activity.

It carries out the reaction N2 + 8 reduced [2Fe-2S]-[ferredoxin] + 16 ATP + 16 H2O = H2 + 8 oxidized [2Fe-2S]-[ferredoxin] + 2 NH4(+) + 16 ADP + 16 phosphate + 6 H(+). The key enzymatic reactions in nitrogen fixation are catalyzed by the nitrogenase complex, which has 2 components: the iron protein and the molybdenum-iron protein. This Methanosarcina mazei (strain ATCC BAA-159 / DSM 3647 / Goe1 / Go1 / JCM 11833 / OCM 88) (Methanosarcina frisia) protein is Nitrogenase iron protein.